Here is a 690-residue protein sequence, read N- to C-terminus: BURP domain-containing protein 14 (690 aa).

The first 26 residues, 1–26 (MAPPRHARLVAATIAVLLCHLPRSAA), serve as a signal peptide directing secretion. Positions 134 to 163 (GSSWSKSSSDGDGAAAAAAPAGGGGGGGGG) are disordered. Residues 135–153 (SSWSKSSSDGDGAAAAAAP) are compositionally biased toward low complexity. The span at 154–163 (AGGGGGGGGG) shows a compositional bias: gly residues. N-linked (GlcNAc...) asparagine glycosylation is present at Asn-178. The segment covering 201–211 (SNGGGGGGGGV) has biased composition (gly residues). Residues 201–232 (SNGGGGGGGGVDSFRRYGKGSQGRNDSFTSYE) are disordered. Residues Asn-225, Asn-317, Asn-379, Asn-432, Asn-450, and Asn-601 are each glycosylated (N-linked (GlcNAc...) asparagine). The 213-residue stretch at 477–689 (FFRERDLVAG…FQGDMTWTVA (213 aa)) folds into the BURP domain.

In terms of tissue distribution, expressed in panicles.

This chain is BURP domain-containing protein 14 (BURP14), found in Oryza sativa subsp. japonica (Rice).